A 640-amino-acid polypeptide reads, in one-letter code: Threonine--tRNA ligase (640 aa).

The TGS domain occupies 1 to 61; it reads MVKITYPDNS…MQDSTIKLIT (61 aa). Residues 242–533 are catalytic; that stretch reads DHRKLGPKLN…LIENFAGEFP (292 aa). Residues cysteine 334, histidine 385, and histidine 510 each coordinate Zn(2+).

Belongs to the class-II aminoacyl-tRNA synthetase family. Homodimer. Zn(2+) serves as cofactor.

The protein resides in the cytoplasm. It carries out the reaction tRNA(Thr) + L-threonine + ATP = L-threonyl-tRNA(Thr) + AMP + diphosphate + H(+). Catalyzes the attachment of threonine to tRNA(Thr) in a two-step reaction: L-threonine is first activated by ATP to form Thr-AMP and then transferred to the acceptor end of tRNA(Thr). Also edits incorrectly charged L-seryl-tRNA(Thr). The sequence is that of Threonine--tRNA ligase from Petrotoga mobilis (strain DSM 10674 / SJ95).